The sequence spans 89 residues: HssA/B-like protein 21 (89 aa).

Belongs to the hssA/B family.

The protein is HssA/B-like protein 21 (hssl21) of Dictyostelium discoideum (Social amoeba).